A 503-amino-acid chain; its full sequence is Maturase K (503 aa).

This sequence belongs to the intron maturase 2 family. MatK subfamily.

The protein localises to the plastid. It localises to the chloroplast. Functionally, usually encoded in the trnK tRNA gene intron. Probably assists in splicing its own and other chloroplast group II introns. This chain is Maturase K, found in Purshia tridentata (Antelope bitterbrush).